Reading from the N-terminus, the 328-residue chain is Transcriptional regulator protein Pur-beta-B (328 aa).

3 disordered regions span residues 1-35 (MADG…ELAS), 100-124 (SPEQ…RALK), and 289-328 (QERQ…VDDD). Alanine 2 is subject to N-acetylalanine. Residues 9–18 (ERGGSSGGPS) show a composition bias toward gly residues. Over residues 24–35 (MSREQETQELAS) the composition is skewed to basic and acidic residues. The tract at residues 27 to 260 (EQETQELASK…LRVSEVKPSY (234 aa)) is DNA-binding. Residues 289 to 303 (QERQRDKMYDRRGPG) show a composition bias toward basic and acidic residues. Residues 304–317 (ERGGSLGPGAGGGG) are compositionally biased toward gly residues. Residues 318 to 328 (DDSETEDVDDD) are compositionally biased toward acidic residues.

Belongs to the PUR DNA-binding protein family.

The protein resides in the nucleus. Transcriptional regulator which can act as an activator or a repressor. The protein is Transcriptional regulator protein Pur-beta-B (purb-b) of Xenopus laevis (African clawed frog).